Reading from the N-terminus, the 460-residue chain is Bifunctional protein GlmU (460 aa).

The interval 1–229 is pyrophosphorylase; sequence MSNYAIILAA…FEESLGVNDR (229 aa). UDP-N-acetyl-alpha-D-glucosamine-binding positions include 8–11, K22, Q72, and 77–78; these read LAAG and GT. D102 contributes to the Mg(2+) binding site. The UDP-N-acetyl-alpha-D-glucosamine site is built by G139, E154, N169, and N227. Position 227 (N227) interacts with Mg(2+). Residues 230–250 form a linker region; that stretch reads VALATAEDVMRRRINKTHMIN. The tract at residues 251–460 is N-acetyltransferase; the sequence is GVTFQNPNAT…KKPHHPSQQK (210 aa). R332 and K350 together coordinate UDP-N-acetyl-alpha-D-glucosamine. The active-site Proton acceptor is H362. 2 residues coordinate UDP-N-acetyl-alpha-D-glucosamine: Y365 and N376. Acetyl-CoA is bound by residues A379, 385–386, S404, A422, and R439; that span reads NY.

The protein in the N-terminal section; belongs to the N-acetylglucosamine-1-phosphate uridyltransferase family. This sequence in the C-terminal section; belongs to the transferase hexapeptide repeat family. In terms of assembly, homotrimer. The cofactor is Mg(2+).

The protein localises to the cytoplasm. The enzyme catalyses alpha-D-glucosamine 1-phosphate + acetyl-CoA = N-acetyl-alpha-D-glucosamine 1-phosphate + CoA + H(+). It catalyses the reaction N-acetyl-alpha-D-glucosamine 1-phosphate + UTP + H(+) = UDP-N-acetyl-alpha-D-glucosamine + diphosphate. It functions in the pathway nucleotide-sugar biosynthesis; UDP-N-acetyl-alpha-D-glucosamine biosynthesis; N-acetyl-alpha-D-glucosamine 1-phosphate from alpha-D-glucosamine 6-phosphate (route II): step 2/2. Its pathway is nucleotide-sugar biosynthesis; UDP-N-acetyl-alpha-D-glucosamine biosynthesis; UDP-N-acetyl-alpha-D-glucosamine from N-acetyl-alpha-D-glucosamine 1-phosphate: step 1/1. It participates in bacterial outer membrane biogenesis; LPS lipid A biosynthesis. Catalyzes the last two sequential reactions in the de novo biosynthetic pathway for UDP-N-acetylglucosamine (UDP-GlcNAc). The C-terminal domain catalyzes the transfer of acetyl group from acetyl coenzyme A to glucosamine-1-phosphate (GlcN-1-P) to produce N-acetylglucosamine-1-phosphate (GlcNAc-1-P), which is converted into UDP-GlcNAc by the transfer of uridine 5-monophosphate (from uridine 5-triphosphate), a reaction catalyzed by the N-terminal domain. This is Bifunctional protein GlmU from Streptococcus thermophilus (strain ATCC BAA-491 / LMD-9).